A 274-amino-acid chain; its full sequence is Protein RecA (274 aa).

Residue 43–50 (GPESSGKT) coordinates ATP.

The protein belongs to the RecA family.

The protein resides in the cytoplasm. In terms of biological role, can catalyze the hydrolysis of ATP in the presence of single-stranded DNA, the ATP-dependent uptake of single-stranded DNA by duplex DNA, and the ATP-dependent hybridization of homologous single-stranded DNAs. It interacts with LexA causing its activation and leading to its autocatalytic cleavage. This chain is Protein RecA, found in Neisseria mucosa.